We begin with the raw amino-acid sequence, 295 residues long: Ethanolamine ammonia-lyase small subunit (295 aa).

3 residues coordinate adenosylcob(III)alamin: Val207, Glu228, and Cys258.

Belongs to the EutC family. The basic unit is a heterodimer which dimerizes to form tetramers. The heterotetramers trimerize; 6 large subunits form a core ring with 6 small subunits projecting outwards. Adenosylcob(III)alamin serves as cofactor.

Its subcellular location is the bacterial microcompartment. It catalyses the reaction ethanolamine = acetaldehyde + NH4(+). It participates in amine and polyamine degradation; ethanolamine degradation. Catalyzes the deamination of various vicinal amino-alcohols to oxo compounds. Allows this organism to utilize ethanolamine as the sole source of nitrogen and carbon in the presence of external vitamin B12. The chain is Ethanolamine ammonia-lyase small subunit from Escherichia coli (strain SMS-3-5 / SECEC).